The chain runs to 250 residues: Sugar fermentation stimulation protein homolog (250 aa).

The protein belongs to the SfsA family.

The chain is Sugar fermentation stimulation protein homolog from Trichodesmium erythraeum (strain IMS101).